The sequence spans 358 residues: DNA primase large subunit PriL (358 aa).

The [4Fe-4S] cluster site is built by Cys-234, Cys-306, Cys-315, and Cys-322. The disordered stretch occupies residues 335-358 (KLDDTDEEELVDWREDEGEEEADA). Residues 338 to 358 (DTDEEELVDWREDEGEEEADA) show a composition bias toward acidic residues.

Belongs to the eukaryotic-type primase large subunit family. In terms of assembly, heterodimer of a small subunit (PriS) and a large subunit (PriL). [4Fe-4S] cluster serves as cofactor.

Functionally, regulatory subunit of DNA primase, an RNA polymerase that catalyzes the synthesis of short RNA molecules used as primers for DNA polymerase during DNA replication. Stabilizes and modulates the activity of the small subunit, increasing the rate of DNA synthesis, and conferring RNA synthesis capability. The DNA polymerase activity may enable DNA primase to also catalyze primer extension after primer synthesis. May also play a role in DNA repair. The sequence is that of DNA primase large subunit PriL from Haloarcula marismortui (strain ATCC 43049 / DSM 3752 / JCM 8966 / VKM B-1809) (Halobacterium marismortui).